We begin with the raw amino-acid sequence, 759 residues long: Holliday junction resolvase YEN1 (759 aa).

3 disordered regions span residues 62-83 (RSRS…SQEY), 498-518 (SQSP…TRRQ), and 683-702 (KSRT…KSRS). Residues 500–512 (SPLKRSNSPSRSK) show a composition bias toward low complexity. S730 and S731 each carry phosphoserine.

It belongs to the XPG/RAD2 endonuclease family. GEN subfamily.

The protein resides in the cytoplasm. It localises to the nucleus. Functionally, endonuclease which resolves Holliday junctions by the introduction of symmetrically related cuts across the junction point, to produce nicked duplex products in which the nicks can be readily ligated. Four-way DNA intermediates, also known as Holliday junctions, are formed during homologous recombination and DNA repair, and their resolution is necessary for proper chromosome segregation. Involved in DNA-damage repair in vegetative cells. This Saccharomyces cerevisiae (strain ATCC 204508 / S288c) (Baker's yeast) protein is Holliday junction resolvase YEN1 (YEN1).